We begin with the raw amino-acid sequence, 166 residues long: SsrA-binding protein (166 aa).

Belongs to the SmpB family.

The protein resides in the cytoplasm. Required for rescue of stalled ribosomes mediated by trans-translation. Binds to transfer-messenger RNA (tmRNA), required for stable association of tmRNA with ribosomes. tmRNA and SmpB together mimic tRNA shape, replacing the anticodon stem-loop with SmpB. tmRNA is encoded by the ssrA gene; the 2 termini fold to resemble tRNA(Ala) and it encodes a 'tag peptide', a short internal open reading frame. During trans-translation Ala-aminoacylated tmRNA acts like a tRNA, entering the A-site of stalled ribosomes, displacing the stalled mRNA. The ribosome then switches to translate the ORF on the tmRNA; the nascent peptide is terminated with the 'tag peptide' encoded by the tmRNA and targeted for degradation. The ribosome is freed to recommence translation, which seems to be the essential function of trans-translation. This chain is SsrA-binding protein, found in Parasynechococcus marenigrum (strain WH8102).